The primary structure comprises 137 residues: Oleosin Ara h 11.0101 (137 aa).

At Ala-2 the chain carries N-acetylalanine; alternate. Helical transmembrane passes span 27–47 (AVVA…GTVI) and 55–75 (LFVI…LLGL).

It belongs to the oleosin family. Expressed in seeds (at protein level).

The protein resides in the lipid droplet. It localises to the membrane. Its function is as follows. May have a structural role to stabilize the lipid body during desiccation of the seed by preventing coalescence of the oil. Probably interacts with both lipid and phospholipid moieties of lipid bodies. May also provide recognition signals for specific lipase anchorage in lipolysis during seedling growth. This Arachis hypogaea (Peanut) protein is Oleosin Ara h 11.0101.